A 176-amino-acid polypeptide reads, in one-letter code: Probable non-specific lipid-transfer protein 1 (176 aa).

The signal sequence occupies residues 1 to 37 (MRTVSAPSAVALVVIVAAGLAWTSLASVAPPAPAPGS). Cystine bridges form between Cys41–Cys89, Cys51–Cys66, Cys67–Cys112, and Cys87–Cys128. Positions 139–176 (QLPVSLRHGPVTGPSDPAHKARLERPQIRVPPPAPEKA) are disordered. Residues 155-165 (PAHKARLERPQ) are compositionally biased toward basic and acidic residues. Residues 167-176 (RVPPPAPEKA) show a composition bias toward pro residues.

It belongs to the plant LTP family.

Its function is as follows. Plant non-specific lipid-transfer proteins transfer phospholipids as well as galactolipids across membranes. May play a role in wax or cutin deposition in the cell walls of expanding epidermal cells and certain secretory tissues. The chain is Probable non-specific lipid-transfer protein 1 from Parietaria judaica (Pellitory-of-the-wall).